Reading from the N-terminus, the 352-residue chain is B1 bradykinin receptor (352 aa).

The Extracellular segment spans residues Met-1–Thr-41. Asn-13 and Asn-21 each carry an N-linked (GlcNAc...) asparagine glycan. Residues Phe-42–Leu-62 traverse the membrane as a helical segment. Over Leu-63–Glu-72 the chain is Cytoplasmic. Residues Ile-73–Ala-93 form a helical membrane-spanning segment. The Extracellular segment spans residues Glu-94 to Arg-110. Cys-109 and Cys-188 are disulfide-bonded. Residues Gly-111–Ser-131 traverse the membrane as a helical segment. Topologically, residues Gln-132 to Ala-153 are cytoplasmic. A helical membrane pass occupies residues Arg-154–Leu-174. The Extracellular segment spans residues Arg-175–Asn-206. A glycan (N-linked (GlcNAc...) asparagine) is linked at Asn-184. The chain crosses the membrane as a helical span at residues Ile-207–Ser-227. Residues Leu-228 to Leu-250 are Cytoplasmic-facing. The helical transmembrane segment at Ile-251–Leu-271 threads the bilayer. At Glu-272 to Gln-294 the chain is on the extracellular side. The chain crosses the membrane as a helical span at residues Leu-295 to Gly-315. The Cytoplasmic portion of the chain corresponds to Arg-316 to Asn-352. The S-palmitoyl cysteine moiety is linked to residue Cys-329.

This sequence belongs to the G-protein coupled receptor 1 family. Bradykinin receptor subfamily. BDKRB1 sub-subfamily.

It is found in the cell membrane. In terms of biological role, this is a receptor for bradykinin. Could be a factor in chronic pain and inflammation. The chain is B1 bradykinin receptor (BDKRB1) from Chlorocebus aethiops (Green monkey).